The chain runs to 406 residues: Dual-specificity RNA methyltransferase RlmN (406 aa).

Glu-119 (proton acceptor) is an active-site residue. In terms of domain architecture, Radical SAM core spans Asp-125–Asp-370. A disulfide bridge connects residues Cys-132 and Cys-375. Residues Cys-139, Cys-143, and Cys-146 each coordinate [4Fe-4S] cluster. Residues Gly-192 to Glu-193, Ser-224, Ser-246 to His-248, and Asn-332 each bind S-adenosyl-L-methionine. The S-methylcysteine intermediate role is filled by Cys-375.

This sequence belongs to the radical SAM superfamily. RlmN family. It depends on [4Fe-4S] cluster as a cofactor.

It localises to the cytoplasm. It catalyses the reaction adenosine(2503) in 23S rRNA + 2 reduced [2Fe-2S]-[ferredoxin] + 2 S-adenosyl-L-methionine = 2-methyladenosine(2503) in 23S rRNA + 5'-deoxyadenosine + L-methionine + 2 oxidized [2Fe-2S]-[ferredoxin] + S-adenosyl-L-homocysteine. The enzyme catalyses adenosine(37) in tRNA + 2 reduced [2Fe-2S]-[ferredoxin] + 2 S-adenosyl-L-methionine = 2-methyladenosine(37) in tRNA + 5'-deoxyadenosine + L-methionine + 2 oxidized [2Fe-2S]-[ferredoxin] + S-adenosyl-L-homocysteine. Specifically methylates position 2 of adenine 2503 in 23S rRNA and position 2 of adenine 37 in tRNAs. m2A2503 modification seems to play a crucial role in the proofreading step occurring at the peptidyl transferase center and thus would serve to optimize ribosomal fidelity. The protein is Dual-specificity RNA methyltransferase RlmN of Xylella fastidiosa (strain M12).